The following is a 54-amino-acid chain: UPF0391 membrane protein Mpe_A2904 (54 aa).

The next 2 membrane-spanning stretches (helical) occupy residues 5–25 (AVVF…GIAA) and 30–50 (IAKI…LFGL).

It belongs to the UPF0391 family.

Its subcellular location is the cell membrane. The protein is UPF0391 membrane protein Mpe_A2904 of Methylibium petroleiphilum (strain ATCC BAA-1232 / LMG 22953 / PM1).